The primary structure comprises 286 residues: Probable 4-deoxy-4-formamido-L-arabinose-phosphoundecaprenol deformylase ArnD (286 aa).

A NodB homology domain is found at 1 to 248 (MGTKLGVPNL…IAINEGINFC (248 aa)).

This sequence belongs to the polysaccharide deacetylase family. ArnD deformylase subfamily.

It carries out the reaction 4-deoxy-4-formamido-alpha-L-arabinopyranosyl di-trans,octa-cis-undecaprenyl phosphate + H2O = 4-amino-4-deoxy-alpha-L-arabinopyranosyl di-trans,octa-cis-undecaprenyl phosphate + formate. It functions in the pathway glycolipid biosynthesis; 4-amino-4-deoxy-alpha-L-arabinose undecaprenyl phosphate biosynthesis; 4-amino-4-deoxy-alpha-L-arabinose undecaprenyl phosphate from UDP-4-deoxy-4-formamido-beta-L-arabinose and undecaprenyl phosphate: step 2/2. Its pathway is bacterial outer membrane biogenesis; lipopolysaccharide biosynthesis. Functionally, catalyzes the deformylation of 4-deoxy-4-formamido-L-arabinose-phosphoundecaprenol to 4-amino-4-deoxy-L-arabinose-phosphoundecaprenol. The modified arabinose is attached to lipid A and is required for resistance to polymyxin and cationic antimicrobial peptides. In Wigglesworthia glossinidia brevipalpis, this protein is Probable 4-deoxy-4-formamido-L-arabinose-phosphoundecaprenol deformylase ArnD.